We begin with the raw amino-acid sequence, 437 residues long: tRNA-2-methylthio-N(6)-dimethylallyladenosine synthase (437 aa).

One can recognise an MTTase N-terminal domain in the interval 1-115; it reads MKVYIETMGC…ISQVIHKEKA (115 aa). [4Fe-4S] cluster contacts are provided by Cys-10, Cys-46, Cys-78, Cys-148, Cys-152, and Cys-155. The Radical SAM core domain maps to 134 to 367; it reads KKAQIRSLLN…QNRHKEILEE (234 aa). In terms of domain architecture, TRAM spans 370-436; it reads KLEVGKTHVV…KGRLIAAIKG (67 aa).

Belongs to the methylthiotransferase family. MiaB subfamily. In terms of assembly, monomer. It depends on [4Fe-4S] cluster as a cofactor.

Its subcellular location is the cytoplasm. The catalysed reaction is N(6)-dimethylallyladenosine(37) in tRNA + (sulfur carrier)-SH + AH2 + 2 S-adenosyl-L-methionine = 2-methylsulfanyl-N(6)-dimethylallyladenosine(37) in tRNA + (sulfur carrier)-H + 5'-deoxyadenosine + L-methionine + A + S-adenosyl-L-homocysteine + 2 H(+). In terms of biological role, catalyzes the methylthiolation of N6-(dimethylallyl)adenosine (i(6)A), leading to the formation of 2-methylthio-N6-(dimethylallyl)adenosine (ms(2)i(6)A) at position 37 in tRNAs that read codons beginning with uridine. The chain is tRNA-2-methylthio-N(6)-dimethylallyladenosine synthase from Helicobacter pylori (strain HPAG1).